We begin with the raw amino-acid sequence, 365 residues long: Peptide chain release factor 2 (365 aa).

N5-methylglutamine is present on Gln252.

It belongs to the prokaryotic/mitochondrial release factor family. In terms of processing, methylated by PrmC. Methylation increases the termination efficiency of RF2.

The protein resides in the cytoplasm. Its function is as follows. Peptide chain release factor 2 directs the termination of translation in response to the peptide chain termination codons UGA and UAA. The polypeptide is Peptide chain release factor 2 (Pseudoalteromonas translucida (strain TAC 125)).